Here is a 445-residue protein sequence, read N- to C-terminus: C-terminal-binding protein 2 (445 aa).

Residue arginine 22 is modified to Asymmetric dimethylarginine. NAD(+) is bound by residues serine 106, 186–191, aspartate 210, 243–249, 270–272, and aspartate 296; these read IGFGRT, CNLNEHN, and AAR. The active site involves arginine 272. Glutamate 301 is a catalytic residue. Histidine 321 functions as the Proton donor in the catalytic mechanism. Residue 321-324 coordinates NAD(+); that stretch reads HTAW. Positions 414-445 are disordered; it reads THNLPTVAHPSQAPSPNQPTKHGDNREHPNEQ. Serine 428 carries the phosphoserine; by HIPK2 modification. Positions 434–445 are enriched in basic and acidic residues; sequence KHGDNREHPNEQ.

Belongs to the D-isomer specific 2-hydroxyacid dehydrogenase family. In terms of assembly, interacts with HIPK2 and PNN. Interacts with the transcription factors ZNF217, BKLF, delta EF1/AREB6/ZEB, EVI-1 and Friend of GATA (FOG) via the consensus motif P-X-[DNS]-L-[STVA]. Also interacts with the C-terminus of adenovirus E1A protein. Can form a complex with BKLF on a CACCC-box oligonucleotide. Can form homodimers or heterodimers of CTBP1 and CTBP2. Interacts with NRIP1 and WIZ. Interacts with PRDM16; represses white adipose tissue (WAT)-specific genes expression. Interacts with MCRIP1. In terms of processing, phosphorylation by HIPK2 on Ser-428 induces proteasomal degradation. As to expression, found in all tissues except spleen and liver.

Its subcellular location is the nucleus. The protein localises to the synapse. Its function is as follows. Corepressor targeting diverse transcription regulators. Isoform 2 probably acts as a scaffold for specialized synapses. Functions in brown adipose tissue (BAT) differentiation. This is C-terminal-binding protein 2 (Ctbp2) from Mus musculus (Mouse).